The sequence spans 700 residues: Long chain acyl-CoA synthetase 7, peroxisomal (700 aa).

The disordered stretch occupies residues 1–29; it reads MEFASPEQRRLETIRSHIDTSPTNDQSSS. The segment covering 7–18 has biased composition (basic and acidic residues); sequence EQRRLETIRSHI. Residues 10 to 18 carry the Microbody targeting signal motif; sequence RLETIRSHI. The segment covering 19–29 has biased composition (polar residues); sequence DTSPTNDQSSS. 266–277 is an ATP binding site; it reads ICYTSGTTGTPK. The interval 526–550 is fatty acid-binding; the sequence is DGWLHTGDIGLWLPGGRLKIIDRKK. The Microbody targeting signal motif lies at 698 to 700; it reads SKL.

Belongs to the ATP-dependent AMP-binding enzyme family. In terms of assembly, interacts with PEX5. Mg(2+) serves as cofactor. In terms of tissue distribution, expressed in roots, stems, leaves flowers and germinating seedling. Preferentially expressed in seeds.

The protein localises to the peroxisome. It carries out the reaction a long-chain fatty acid + ATP + CoA = a long-chain fatty acyl-CoA + AMP + diphosphate. The enzyme catalyses decanoate + ATP + CoA = decanoyl-CoA + AMP + diphosphate. The catalysed reaction is dodecanoate + ATP + CoA = dodecanoyl-CoA + AMP + diphosphate. It catalyses the reaction tetradecanoate + ATP + CoA = tetradecanoyl-CoA + AMP + diphosphate. It carries out the reaction hexadecanoate + ATP + CoA = hexadecanoyl-CoA + AMP + diphosphate. The enzyme catalyses (9Z)-octadecenoate + ATP + CoA = (9Z)-octadecenoyl-CoA + AMP + diphosphate. The catalysed reaction is (9Z,12Z)-octadecadienoate + ATP + CoA = (9Z,12Z)-octadecadienoyl-CoA + AMP + diphosphate. It catalyses the reaction (9Z,12Z,15Z)-octadecatrienoate + ATP + CoA = (9Z,12Z,15Z)-octadecatrienoyl-CoA + AMP + diphosphate. Its pathway is lipid metabolism; fatty acid metabolism. In terms of biological role, activation of long-chain fatty acids for both synthesis of cellular lipids, and degradation via beta-oxidation. Preferentially uses palmitate, palmitoleate, oleate, linoleate and eicosenoate as substrates. Can use myristate and linolenate as substrates. Functions redundantly with LACS6 in lipid mobilization for beta-oxidation during seed germination, which is essential for postgerminative growth and seedling establishment. The chain is Long chain acyl-CoA synthetase 7, peroxisomal from Arabidopsis thaliana (Mouse-ear cress).